The sequence spans 224 residues: Thymidine kinase (224 aa).

ATP-binding positions include 19-26 (GPMFAGKT) and 93-96 (DEVQ). Glutamate 94 functions as the Proton acceptor in the catalytic mechanism. Cysteine 150, cysteine 153, cysteine 188, and histidine 191 together coordinate Zn(2+).

Belongs to the thymidine kinase family. Homotetramer.

Its subcellular location is the cytoplasm. It catalyses the reaction thymidine + ATP = dTMP + ADP + H(+). This Mycoplasmoides gallisepticum (strain R(low / passage 15 / clone 2)) (Mycoplasma gallisepticum) protein is Thymidine kinase.